The chain runs to 1151 residues: uncharacterized protein (1151 aa).

Disordered stretches follow at residues 611 to 633 (FVKGDRSDSGGGPPPPPPPDEEE), 709 to 740 (NLVPVGESPMSAPDIDLPIPGLPGPQPQIMEV), 753 to 778 (PPILPIQPPLPLPAPPTPQEPPKSIL), 795 to 880 (PPVI…PPKL), and 1060 to 1151 (LKEP…TQQE). Pro residues-rich tracts occupy residues 754–773 (PILPIQPPLPLPAPPTPQEP) and 811–842 (IVPPSPAVVSPPSPTTIPQEPPTQPSPIPSQP). Positions 867 to 878 (PITPDTPAITPP) are enriched in low complexity. Positions 1082 to 1091 (ESDNEDDELD) are enriched in acidic residues. Residues 1131–1142 (PVDTSDATKIST) show a composition bias toward polar residues.

This is an uncharacterized protein from Ostreid herpesvirus 1 (isolate France) (OsHV-1).